The chain runs to 622 residues: MPPTQAESVIRSIIREIGQECAAHGEIVSETLIAFMVKAVVLDPSNGFNMDRTLMKSDVQNLVKLCMTRLLDTKNPSLDTIKMQVYFDMNYTNRVEFLEEHHRVLESRLGSVTREITDNRACAKEELESLYRKIISYVLLRSGLGSPTDIKTVREVTAALQSIFPQAELGTFLTLSKKDKERQLKELTMIVTGIRLFNRDCGKGGEGIDDLPAVLHVAIPATMQHIDYQLETARSQVYRYTAILEKAANDPHMRAELQPYMLKEALYNIRQYEVFLQIILSDIITGAQEVEMMTKQLGAHLEQLKMTIKSKTAVPTSQVFPIFIALSTLWTSLQDETIVVGVLSNLFTHIQPFLGAHELYFPERAMQRHLNGATVKTDVCRMKEHMEDRVNVADFRKLEWLFPETTANFDKLLIQYRGFCAYTFAATDGLLLPGNPAIGILKYKEKYYTFNSKDAAYSFAENPEHYIDIVREKAKKNTELIQLLELHQQFETLIPYSQMRDADKHYIKPITKCESSTQTDTHILPPTIVRSYEWNEWELRRKAIKLANLHQKVTHSVQTDLSHLRRENCSQVYPPKDTSTQSMREDSTGVPRPQIYLAGLRGGKSEITDEVKVNLTRAVDET.

The segment at 571-592 is disordered; sequence QVYPPKDTSTQSMREDSTGVPR.

The protein belongs to the CFAP206 family.

It is found in the cytoplasm. It localises to the cytoskeleton. The protein resides in the cilium axoneme. The protein localises to the cilium basal body. In terms of biological role, essential for sperm motility and is involved in the regulation of the beating frequency of motile cilia on the epithelial cells of the respiratory tract. Required for the establishment of radial spokes in sperm flagella. The polypeptide is Cilia- and flagella-associated protein 206 (Macaca fascicularis (Crab-eating macaque)).